The chain runs to 124 residues: Small ribosomal subunit protein uS12c (124 aa).

This sequence belongs to the universal ribosomal protein uS12 family. As to quaternary structure, part of the 30S ribosomal subunit.

Its subcellular location is the plastid. It is found in the chloroplast. Functionally, with S4 and S5 plays an important role in translational accuracy. Located at the interface of the 30S and 50S subunits. In Oryza nivara (Indian wild rice), this protein is Small ribosomal subunit protein uS12c (rps12).